A 244-amino-acid chain; its full sequence is Small ribosomal subunit protein uS3 (244 aa).

A KH type-2 domain is found at 38–106; that stretch reads IRKYLNARLA…DIQINIFEVK (69 aa). A disordered region spans residues 217 to 244; it reads TQSKESGRGNNGGNNGGGKNFKRKKNNR. Positions 225 to 235 are enriched in gly residues; the sequence is GNNGGNNGGGK.

Belongs to the universal ribosomal protein uS3 family. Part of the 30S ribosomal subunit. Forms a tight complex with proteins S10 and S14.

Functionally, binds the lower part of the 30S subunit head. Binds mRNA in the 70S ribosome, positioning it for translation. In Bacteroides fragilis (strain ATCC 25285 / DSM 2151 / CCUG 4856 / JCM 11019 / LMG 10263 / NCTC 9343 / Onslow / VPI 2553 / EN-2), this protein is Small ribosomal subunit protein uS3.